Here is an 837-residue protein sequence, read N- to C-terminus: Protein translocase subunit SecA 1 (837 aa).

Residues Gln-85, 103–107 (GEGKT), and Asp-492 each bind ATP. Residues 791–837 (KGEAINPAEGKPEAKRQPIRKDQHIGRNDPCPCGSGKKYKNCHGKEA) are disordered. The segment covering 800-817 (GKPEAKRQPIRKDQHIGR) has biased composition (basic and acidic residues). Zn(2+)-binding residues include Cys-821, Cys-823, Cys-832, and His-833. Positions 827-837 (KKYKNCHGKEA) are enriched in basic residues.

The protein belongs to the SecA family. Monomer and homodimer. Part of the essential Sec protein translocation apparatus which comprises SecA, SecYEG and auxiliary proteins SecDF. Other proteins may also be involved. The cofactor is Zn(2+).

The protein localises to the cell membrane. It localises to the cytoplasm. It carries out the reaction ATP + H2O + cellular proteinSide 1 = ADP + phosphate + cellular proteinSide 2.. In terms of biological role, part of the Sec protein translocase complex. Interacts with the SecYEG preprotein conducting channel. Has a central role in coupling the hydrolysis of ATP to the transfer of proteins into and across the cell membrane, serving as an ATP-driven molecular motor driving the stepwise translocation of polypeptide chains across the membrane. This chain is Protein translocase subunit SecA 1, found in Listeria monocytogenes serovar 1/2a (strain ATCC BAA-679 / EGD-e).